Here is a 344-residue protein sequence, read N- to C-terminus: MEARLKELKQKALELIEEAKELKGLNDVRVAYLGKKGPITEVLRGMGKLSAEERPRMGALVNEVREAIQTRLEDKISNLEKAVIEAKLATETIDVTLPGRPVETGCHHPLTAVVEQIEDVFIGMGYEVAEGTEVEKDYYNFEALNLPKDHPARDMQDTFYITEETLLRTHTSSVQARTMENNKEKGPIKIICPGKVYRRDDDDATHSHQFMQIEGLVIDKNIRMSDLKGTLQVFVKKMFGEDREIRLRPSFFPFTEPSVEMDISCMMCHGKGCGTCKGTGWIEILGAGMVHPNVLEMAGYDSKEYQGFAFGMGAERIAMLKYGVDDIRHFYTNDVRFLQQFKRA.

Residue glutamate 256 participates in Mg(2+) binding.

Belongs to the class-II aminoacyl-tRNA synthetase family. Phe-tRNA synthetase alpha subunit type 1 subfamily. Tetramer of two alpha and two beta subunits. Requires Mg(2+) as cofactor.

The protein localises to the cytoplasm. It carries out the reaction tRNA(Phe) + L-phenylalanine + ATP = L-phenylalanyl-tRNA(Phe) + AMP + diphosphate + H(+). This Bacillus cereus (strain G9842) protein is Phenylalanine--tRNA ligase alpha subunit.